A 276-amino-acid chain; its full sequence is Triple specificity protein phosphatase PtpB (276 aa).

The Phosphocysteine intermediate role is filled by Cys-160. The UIM-like region stretch occupies residues 232-250 (LGVRAEYLAAARQTIDETY).

This sequence belongs to the protein-tyrosine phosphatase family. In terms of assembly, interacts (via UIM-like region) with host ubiquitin; activating the phosphatidylinositol phosphate phosphatase activity.

Its subcellular location is the secreted. The protein resides in the host cytoplasm. The protein localises to the host cell membrane. It catalyses the reaction O-phospho-L-tyrosyl-[protein] + H2O = L-tyrosyl-[protein] + phosphate. The catalysed reaction is O-phospho-L-seryl-[protein] + H2O = L-seryl-[protein] + phosphate. It carries out the reaction O-phospho-L-threonyl-[protein] + H2O = L-threonyl-[protein] + phosphate. The enzyme catalyses 1,2-dioctanoyl-sn-glycero-3-phospho-(1-D-myo-inositol-3-phosphate) + H2O = 1,2-dioctanoyl-sn-glycero-3-phospho-(1D-myo-inositol) + phosphate. It catalyses the reaction 1,2-dioctanoyl-sn-glycero-3-phospho-(1-D-myo-inositol-4-phosphate) + H2O = 1,2-dioctanoyl-sn-glycero-3-phospho-(1D-myo-inositol) + phosphate. The catalysed reaction is 1,2-dioctanoyl-sn-glycero-3-phospho-(1D-myo-inositol-5-phosphate) + H2O = 1,2-dioctanoyl-sn-glycero-3-phospho-(1D-myo-inositol) + phosphate. With respect to regulation, binding to host ubiquitin is required to activate the phosphatidylinositol phosphate phosphatase activity. Phosphatase activity is inhibited by sodium orthovanadate, a specific inhibitor of tyrosine phosphatases, but not by okadaic acid, an inhibitor of serine/threonine phosphatases. Inhibition of the enzyme reduces mycobacterial survival in infected macrophages. Inhibitors also enhance killing efficacy by first-line antibiotics. In terms of biological role, essential virulence factor that promotes mycobacterial survival within host macrophages. Acts as a phosphatase that possesses triple substrate specificity toward phosphotyrosine, phosphoserine/threonine and phosphoinositides. Supports mycobacteria survival during infection by modulating the normal host signaling pathways, attenuating the bactericidal immune responses and promoting the host cell survival. Inhibits host pyroptosis by disrupting the membrane localization of host gasdermin-D (GSDMD): acts by catalyzing dephosphorylation of phosphatidylinositol (4,5)-bisphosphate and phosphatidylinositol 4-phosphate, thereby inhibiting the membrane targeting of GSDMD and subsequent cytokine release and pyroptosis. Inhibits host inflammatory responses and apoptosis through impeding the NF-kappa-B and MAPK signal pathways and TP53/p53 expression in the macrophage. Blocks the IL6/IL-6 production by down-regulating ERK1/2, p38 and p65 activity. Prevents macrophage cell death by activating the Akt pathway and blocking caspase 3 activity. Reduces the expression of iNOS in activated macrophages and inhibits the generation of destroying reactive nitrogen intermediate NO. This Mycobacterium tuberculosis (strain ATCC 25618 / H37Rv) protein is Triple specificity protein phosphatase PtpB.